The sequence spans 864 residues: Alanine--tRNA ligase (864 aa).

Positions 534, 538, 639, and 643 each coordinate Zn(2+).

This sequence belongs to the class-II aminoacyl-tRNA synthetase family. Zn(2+) serves as cofactor.

The protein localises to the cytoplasm. It carries out the reaction tRNA(Ala) + L-alanine + ATP = L-alanyl-tRNA(Ala) + AMP + diphosphate. In terms of biological role, catalyzes the attachment of alanine to tRNA(Ala) in a two-step reaction: alanine is first activated by ATP to form Ala-AMP and then transferred to the acceptor end of tRNA(Ala). Also edits incorrectly charged Ser-tRNA(Ala) and Gly-tRNA(Ala) via its editing domain. This Onion yellows phytoplasma (strain OY-M) protein is Alanine--tRNA ligase.